The following is a 330-amino-acid chain: Glycoprotein integral membrane protein 1 (330 aa).

Residues 1 to 23 form the signal peptide; that stretch reads MEGAPLGPLALRLLLFVALPASG. Residues 24–268 lie on the Extracellular side of the membrane; that stretch reads WLTTGAPEPP…VFPVFFQFLN (245 aa). N-linked (GlcNAc...) asparagine glycans are attached at residues N46, N64, N166, and N191. A helical transmembrane segment spans residues 269-289; the sequence is IMVVGITGAAVVITILKVLFP. The Cytoplasmic portion of the chain corresponds to 290–330; it reads VSEYKGILQLDKVDVIPVTAINLYPDGPEKTAENLEDKTCI.

The protein localises to the membrane. This is Glycoprotein integral membrane protein 1 (GINM1) from Pongo abelii (Sumatran orangutan).